A 996-amino-acid chain; its full sequence is Oxysterol-binding protein homolog 3 (996 aa).

The segment at 1 to 183 is GOLD domain; sequence METIDIQNRS…KKKILFNASV (183 aa). A disordered region spans residues 75-114; it reads GSSSNIEEHHRRSSQHSHSSSNGSDNKRKERSYSSLSISG. Serine 190 and serine 193 each carry phosphoserine. The residue at position 210 (threonine 210) is a Phosphothreonine. The region spanning 221 to 315 is the PH domain; sequence GRYLQGYLLK…WVDALQTCFD (95 aa). Threonine 323 carries the phosphothreonine modification. Serine 324 is subject to Phosphoserine. Phosphothreonine occurs at positions 325 and 352. The interval 338 to 372 is disordered; that stretch reads EVINKSSPQDHDHLTPTATTKSALSHRQHTQKDMD. The FFAT signature appears at 514 to 520; the sequence is EFFDAEE. Residues 556–611 are disordered; that stretch reads KEVQLSGSEQIASSSVESYTTNDENHSRKHLKNRHKNRRRGHPHHQKTKSAQSSTE. Polar residues predominate over residues 558-577; sequence VQLSGSEQIASSSVESYTTN. Residues 582–603 are compositionally biased toward basic residues; sequence SRKHLKNRHKNRRRGHPHHQKT. The residue at position 605 (serine 605) is a Phosphoserine. The segment at 642–982 is OSBP-related domain (ORD); sequence SLLSFLRKNV…YITGPKSYWE (341 aa). A 1,2-diacyl-sn-glycero-3-phospho-(1D-myo-inositol 4-phosphate)-binding positions include 657 to 660, lysine 717, 745 to 746, and 945 to 949; these read SIAM, HR, and EQLQR.

The protein belongs to the OSBP family. Interacts with SCS2.

The protein localises to the cytoplasm. It localises to the endoplasmic reticulum membrane. Its function is as follows. Lipid transport protein (LTP) involved in non-vesicular transfer of lipids between membranes. Functions in phosphoinositide-coupled directional transport of various lipids by carrying the lipid molecule in a hydrophobic pocket and transferring it between membranes through the cytosol. Involved in maintenance of intracellular sterol distribution and homeostasis. May serve as a sensor of PI4P levels at PM-ER membrane contact site, regulating PI4P phosphatase SAC1 activity. May be involved in ergosterol transport from the plasma membrane (PM) to the ER, however it does not bind sterols directly. Plays a role in the positive regulation of vesicular transport of ceramide from the ER to the Golgi, negatively regulating COPII-mediated ER export of cargos. This Saccharomyces cerevisiae (strain ATCC 204508 / S288c) (Baker's yeast) protein is Oxysterol-binding protein homolog 3.